The primary structure comprises 248 residues: UDP-2,3-diacylglucosamine hydrolase (248 aa).

Mn(2+) contacts are provided by aspartate 8, histidine 10, aspartate 41, asparagine 79, and histidine 114. 79 to 80 lines the substrate pocket; it reads NR. Residues aspartate 122, serine 160, aspartate 171, glutamine 174, and histidine 202 each coordinate substrate. 2 residues coordinate Mn(2+): histidine 202 and histidine 204.

Belongs to the LpxH family. It depends on Mn(2+) as a cofactor.

The protein resides in the cell inner membrane. It carries out the reaction UDP-2-N,3-O-bis[(3R)-3-hydroxytetradecanoyl]-alpha-D-glucosamine + H2O = 2-N,3-O-bis[(3R)-3-hydroxytetradecanoyl]-alpha-D-glucosaminyl 1-phosphate + UMP + 2 H(+). It participates in glycolipid biosynthesis; lipid IV(A) biosynthesis; lipid IV(A) from (3R)-3-hydroxytetradecanoyl-[acyl-carrier-protein] and UDP-N-acetyl-alpha-D-glucosamine: step 4/6. Hydrolyzes the pyrophosphate bond of UDP-2,3-diacylglucosamine to yield 2,3-diacylglucosamine 1-phosphate (lipid X) and UMP by catalyzing the attack of water at the alpha-P atom. Involved in the biosynthesis of lipid A, a phosphorylated glycolipid that anchors the lipopolysaccharide to the outer membrane of the cell. The chain is UDP-2,3-diacylglucosamine hydrolase from Stenotrophomonas maltophilia (strain K279a).